Reading from the N-terminus, the 213-residue chain is Peptidoglycan-N-acetylglucosamine deacetylase BC_3618 (213 aa).

The region spanning Lys-22 to Val-203 is the NodB homology domain. The Proton acceptor role is filled by Asp-29. Positions 30, 80, and 84 each coordinate Zn(2+). Catalysis depends on His-175, which acts as the Proton donor.

Belongs to the polysaccharide deacetylase family. Zn(2+) serves as cofactor.

It carries out the reaction peptidoglycan-N-acetyl-D-glucosamine + H2O = peptidoglycan-D-glucosamine + acetate.. Its activity is regulated as follows. Inhibited by CuCl(2) and ZnCl(2). Functionally, catalyzes the deacetylation of N-acetylglucosamine (GlcNAc) residues in peptidoglycan. Also acts on soluble chitin substrates and N-acetylchitooligomers. Acts on cell wall peptidoglycan from the Gram-positive bacteria B.cereus and B.subtilis and the Gram-negative bacterium H.pylori. Not active on acetylated xylan. This chain is Peptidoglycan-N-acetylglucosamine deacetylase BC_3618, found in Bacillus cereus (strain ATCC 14579 / DSM 31 / CCUG 7414 / JCM 2152 / NBRC 15305 / NCIMB 9373 / NCTC 2599 / NRRL B-3711).